A 349-amino-acid chain; its full sequence is Protein RecA (349 aa).

An ATP-binding site is contributed by Gly-65–Thr-72.

Belongs to the RecA family.

The protein localises to the cytoplasm. Can catalyze the hydrolysis of ATP in the presence of single-stranded DNA, the ATP-dependent uptake of single-stranded DNA by duplex DNA, and the ATP-dependent hybridization of homologous single-stranded DNAs. It interacts with LexA causing its activation and leading to its autocatalytic cleavage. The polypeptide is Protein RecA (Azotobacter vinelandii (strain DJ / ATCC BAA-1303)).